A 151-amino-acid chain; its full sequence is Large ribosomal subunit protein uL15 (151 aa).

The interval M1 to P51 is disordered. A compositionally biased stretch (basic residues) spans S15–R24. A compositionally biased stretch (gly residues) spans H26–M38.

This sequence belongs to the universal ribosomal protein uL15 family. As to quaternary structure, part of the 50S ribosomal subunit.

Its function is as follows. Binds to the 23S rRNA. The protein is Large ribosomal subunit protein uL15 of Gloeobacter violaceus (strain ATCC 29082 / PCC 7421).